A 643-amino-acid polypeptide reads, in one-letter code: MRPLVCVFTMFLLALLSSNTESVAVMSVDMGSEWMKIAIVKPGVPMEIVLNKESRRKTPVAIALKENERLFGDSALGMAVKNPKVTFRYFQDLLGKRADNPHVKAFEARFPEYQLVKDEHRETVLFKLSEELTYSPEELLGMMLNYSRSLAEEFAEQPVKDVVITVPAFFNQAERRAVLQAAQLSDLKVLQLINDNTAVALNYGVFRRKDINATAQNIMFYEMGSRSTICTIVTYQSVKTKDSGMQPQLQIRGVGFDRTLGGIEMDLRLRDHLAKLFNEQKKSKKDVRENQRAMSKLLKEANRVKTILSANNDHMAQIEGLMDDIDFKAKVTRQELEDLCADLFNRVSAPVQHALSSAEMKMEEIDQVILVGGATRVPKVQELLLKVVGKEELGKNINADEAAAMGAVYQAAALSKAFKVKPFIVRDAAIFPIQVEFTREVEEEDHSKSLKHNKRILFQRLAPYPQRKVITFNRYTDNFAFSINYGDLSYLGPDDLKVFGSLNLTTVKLNGVGESFQKRSDYESKGIKAHFNMDESGLLTLDRVEAVFETVVDEKPEQESTLTKLGNTISSLFGGGSSVPETKENATDSVQEEDEVPTEPTKEEEQESADAADKQKDKEKGTTATNEEEEGKKEEEKSEPQEE.

The N-terminal stretch at 1 to 22 is a signal peptide; the sequence is MRPLVCVFTMFLLALLSSNTES. The interval 565–643 is disordered; the sequence is LGNTISSLFG…EEEKSEPQEE (79 aa). The span at 590–610 shows a compositional bias: acidic residues; it reads VQEEDEVPTEPTKEEEQESAD. 2 stretches are compositionally biased toward basic and acidic residues: residues 611–621 and 630–643; these read AADKQKDKEKG and EGKK…PQEE.

Belongs to the heat shock protein 70 family.

The protein localises to the endoplasmic reticulum lumen. Has a pivotal role in cytoprotective cellular mechanisms triggered by oxygen deprivation. May play a role as a molecular chaperone and participate in protein folding. This is Hypoxia up-regulated protein 1 (hyou1) from Xenopus tropicalis (Western clawed frog).